The sequence spans 190 residues: Xanthine phosphoribosyltransferase (190 aa).

Residues L20 and N27 each contribute to the xanthine site. 129–133 (ANGRA) is a binding site for 5-phospho-alpha-D-ribose 1-diphosphate. K157 serves as a coordination point for xanthine.

This sequence belongs to the purine/pyrimidine phosphoribosyltransferase family. Xpt subfamily. In terms of assembly, homodimer.

The protein resides in the cytoplasm. It catalyses the reaction XMP + diphosphate = xanthine + 5-phospho-alpha-D-ribose 1-diphosphate. It functions in the pathway purine metabolism; XMP biosynthesis via salvage pathway; XMP from xanthine: step 1/1. Its function is as follows. Converts the preformed base xanthine, a product of nucleic acid breakdown, to xanthosine 5'-monophosphate (XMP), so it can be reused for RNA or DNA synthesis. In Clostridioides difficile (strain 630) (Peptoclostridium difficile), this protein is Xanthine phosphoribosyltransferase.